A 460-amino-acid chain; its full sequence is Exodeoxyribonuclease 7 large subunit (460 aa).

Belongs to the XseA family. Heterooligomer composed of large and small subunits.

Its subcellular location is the cytoplasm. The catalysed reaction is Exonucleolytic cleavage in either 5'- to 3'- or 3'- to 5'-direction to yield nucleoside 5'-phosphates.. In terms of biological role, bidirectionally degrades single-stranded DNA into large acid-insoluble oligonucleotides, which are then degraded further into small acid-soluble oligonucleotides. The protein is Exodeoxyribonuclease 7 large subunit of Edwardsiella ictaluri (strain 93-146).